Reading from the N-terminus, the 171-residue chain is UPF0260 protein Nham_1404 (171 aa).

The protein belongs to the UPF0260 family.

In Nitrobacter hamburgensis (strain DSM 10229 / NCIMB 13809 / X14), this protein is UPF0260 protein Nham_1404.